A 361-amino-acid chain; its full sequence is P2Y purinoceptor 4 (361 aa).

Positions 1–20 are disordered; sequence MTSAESLLFTSLGPSPSSGD. The Extracellular portion of the chain corresponds to 1-30; it reads MTSAESLLFTSLGPSPSSGDGDCRFNEEFK. Residues 31–58 traverse the membrane as a helical segment; it reads FILLPMSYAVVFVLGLALNAPTLWLFLF. Over 59-68 the chain is Cytoplasmic; that stretch reads RLRPWDATAT. A helical membrane pass occupies residues 69-91; sequence YMFHLALSDTLYVLSLPTLVYYY. The Extracellular portion of the chain corresponds to 92 to 108; sequence AARNHWPFGTGLCKFVR. Cysteines 104 and 181 form a disulfide. The chain crosses the membrane as a helical span at residues 109-127; sequence FLFYWNLYCSVLFLTCISV. Residues 128-149 lie on the Cytoplasmic side of the membrane; it reads HRYLGICHPLRAIRWGRPRFAS. The chain crosses the membrane as a helical span at residues 150–170; the sequence is LLCLGVWLVVAGCLVPNLFFV. The Extracellular portion of the chain corresponds to 171–192; sequence TTNANGTTILCHDTTLPEEFDH. A glycan (N-linked (GlcNAc...) asparagine) is linked at N175. A helical membrane pass occupies residues 193–218; that stretch reads YVYFSSAVMVLLFGLPFLITLVCYGL. The Cytoplasmic segment spans residues 219-242; that stretch reads MARRLYRPLPGAGQSSSRLRSLRT. The helical transmembrane segment at 243-265 threads the bilayer; that stretch reads IAVVLTVFAVCFVPFHITRTIYY. Over 266-283 the chain is Extracellular; sequence QARLLQADCHVLNIVNVV. The chain crosses the membrane as a helical span at residues 284–305; it reads YKVTRPLASANSCLDPVLYLFT. At 306-361 the chain is on the cytoplasmic side; the sequence is GDKYRNQLQQLCRGSKPKPRTAASSLALVTLHEESISRWADTHQDSTFSAYEGDRL.

The protein belongs to the G-protein coupled receptor 1 family. Post-translationally, phosphorylation of Ser-329 and Ser-330 is a key step in agonist-dependent desensitization and loss of surface P2RY4. This phosphorylation does not involve PKC, nor other calcium-activated kinases. Widely expressed at low levels. In brain, higher expression in the pineal gland and ventricular system.

It localises to the cell membrane. Receptor for ATP and UTP coupled to G-proteins that activate a phosphatidylinositol-calcium second messenger system. Not activated by ADP or UDP. The chain is P2Y purinoceptor 4 (P2ry4) from Rattus norvegicus (Rat).